The following is a 323-amino-acid chain: Cytochrome c biogenesis protein CcsA (323 aa).

8 helical membrane-spanning segments follow: residues 17–37 (VVSI…IVGF), 44–64 (GMII…FFSG), 68–88 (FSDL…FYMV), 98–118 (LSTI…SGLL), 143–163 (MILG…ILVI), 229–249 (IISL…VWAN), 262–279 (ETWA…LHSR), and 291–311 (IVAS…NLLG).

This sequence belongs to the CcmF/CycK/Ccl1/NrfE/CcsA family. In terms of assembly, may interact with Ccs1.

The protein localises to the plastid. Its subcellular location is the chloroplast thylakoid membrane. Functionally, required during biogenesis of c-type cytochromes (cytochrome c6 and cytochrome f) at the step of heme attachment. The chain is Cytochrome c biogenesis protein CcsA from Lotus japonicus (Lotus corniculatus var. japonicus).